We begin with the raw amino-acid sequence, 301 residues long: Oxaloacetate tautomerase YisK (301 aa).

Lys-99 lines the oxalate pocket. Positions 148, 150, and 179 each coordinate Mn(2+). Residues Lys-196 and Thr-266 each contribute to the oxalate site.

The protein belongs to the FAH family. Homodimer. Mg(2+) serves as cofactor. Requires Mn(2+) as cofactor.

It localises to the cytoplasm. It catalyses the reaction oxaloacetate = enol-oxaloacetate. The catalysed reaction is oxaloacetate + H(+) = pyruvate + CO2. In terms of biological role, tautomerase that converts enol-oxaloacetate to the keto form of oxaloacetate. Also shows weak oxaloacetate decarboxylase (ODx), catalyzing the decarboxylation of oxaloacetate (OAA) to pyruvate and CO(2). The polypeptide is Oxaloacetate tautomerase YisK (Bacillus subtilis (strain 168)).